The sequence spans 112 residues: Ig kappa chain V-II region MOPC 167 (112 aa).

The segment at 1 to 23 (DIVITQDELSNPVTSGESVSISC) is framework-1. Cys-23 and Cys-93 form a disulfide bridge. A complementarity-determining-1 region spans residues 24-39 (RSSKSLLYKDGKTYLN). Residues 40 to 54 (WFLQRPGQSPQLLIS) form a framework-2 region. A complementarity-determining-2 region spans residues 55–61 (LMSTRAS). The segment at 62–93 (GVSDRFSGSGSRTDFTLEISRVKAEDVGVYYC) is framework-3. The complementarity-determining-3 stretch occupies residues 94 to 102 (QQLVEYPLT). The framework-4 stretch occupies residues 103–112 (FGAGTKLELK).

The sequence is that of Ig kappa chain V-II region MOPC 167 from Mus musculus (Mouse).